Consider the following 1527-residue polypeptide: uncharacterized protein (1527 aa).

Coiled-coil stretches lie at residues 262–293 (NVEI…NINE), 699–751 (QQQQ…SEKL), 905–932 (NNLN…ENQI), and 1217–1255 (KIIS…QKSS). A disordered region spans residues 683-734 (TNQEQEQDQQDQPPPPQQQQEQQQEQQQQQEQQQQQDQQQQDQQQDQQEKQQ). Over residues 700 to 728 (QQQEQQQEQQQQQEQQQQQDQQQQDQQQD) the composition is skewed to low complexity.

This is an uncharacterized protein from Dictyostelium discoideum (Social amoeba).